The following is a 729-amino-acid chain: Fatty acid oxidation complex subunit alpha (729 aa).

An enoyl-CoA hydratase/isomerase region spans residues M1–K189. D296 is a binding site for substrate. Residues E311 to A729 form a 3-hydroxyacyl-CoA dehydrogenase region. Residues M324, D343, V400–E402, K407, and S429 each bind NAD(+). H450 (for 3-hydroxyacyl-CoA dehydrogenase activity) is an active-site residue. Position 453 (N453) interacts with NAD(+). Positions 500 and 660 each coordinate substrate. Positions R708–A729 are disordered.

This sequence in the N-terminal section; belongs to the enoyl-CoA hydratase/isomerase family. It in the C-terminal section; belongs to the 3-hydroxyacyl-CoA dehydrogenase family. In terms of assembly, heterotetramer of two alpha chains (FadB) and two beta chains (FadA).

The catalysed reaction is a (3S)-3-hydroxyacyl-CoA + NAD(+) = a 3-oxoacyl-CoA + NADH + H(+). It carries out the reaction a (3S)-3-hydroxyacyl-CoA = a (2E)-enoyl-CoA + H2O. The enzyme catalyses a 4-saturated-(3S)-3-hydroxyacyl-CoA = a (3E)-enoyl-CoA + H2O. It catalyses the reaction (3S)-3-hydroxybutanoyl-CoA = (3R)-3-hydroxybutanoyl-CoA. The catalysed reaction is a (3Z)-enoyl-CoA = a 4-saturated (2E)-enoyl-CoA. It carries out the reaction a (3E)-enoyl-CoA = a 4-saturated (2E)-enoyl-CoA. Its pathway is lipid metabolism; fatty acid beta-oxidation. Its function is as follows. Involved in the aerobic and anaerobic degradation of long-chain fatty acids via beta-oxidation cycle. Catalyzes the formation of 3-oxoacyl-CoA from enoyl-CoA via L-3-hydroxyacyl-CoA. It can also use D-3-hydroxyacyl-CoA and cis-3-enoyl-CoA as substrate. The polypeptide is Fatty acid oxidation complex subunit alpha (Escherichia coli O6:H1 (strain CFT073 / ATCC 700928 / UPEC)).